Reading from the N-terminus, the 49-residue chain is Small ribosomal subunit protein eS31 (49 aa).

4 residues coordinate Zn(2+): cysteine 21, cysteine 24, cysteine 39, and cysteine 42. The C4-type zinc-finger motif lies at 21 to 42 (CPRCGNGVFLAEHEDRMSCGRC).

The protein belongs to the eukaryotic ribosomal protein eS31 family. In terms of assembly, part of the 30S ribosomal subunit. It depends on Zn(2+) as a cofactor.

The polypeptide is Small ribosomal subunit protein eS31 (Methanothrix thermoacetophila (strain DSM 6194 / JCM 14653 / NBRC 101360 / PT) (Methanosaeta thermophila)).